We begin with the raw amino-acid sequence, 314 residues long: Elongator complex protein 5 (314 aa).

It belongs to the ELP5 family. Component of the elongator complex.

The protein localises to the cytoplasm. The protein resides in the nucleus. The protein operates within tRNA modification; 5-methoxycarbonylmethyl-2-thiouridine-tRNA biosynthesis. In terms of biological role, component of the elongator complex, a multiprotein complex which is required for multiple tRNA modifications, including mcm5U (5-methoxycarbonylmethyl uridine), mcm5s2U (5-methoxycarbonylmethyl-2-thiouridine), and ncm5U (5-carbamoylmethyl uridine). The elongator complex catalyzes formation of carboxymethyluridine in the wobble base at position 34 in tRNAs. The chain is Elongator complex protein 5 (iki1) from Schizosaccharomyces pombe (strain 972 / ATCC 24843) (Fission yeast).